The following is a 162-amino-acid chain: 2-C-methyl-D-erythritol 2,4-cyclodiphosphate synthase (162 aa).

2 residues coordinate a divalent metal cation: Asp12 and His14. Residues 12–14 and 38–39 contribute to the 4-CDP-2-C-methyl-D-erythritol 2-phosphate site; these read DVH and HS. Position 46 (His46) interacts with a divalent metal cation. Residues 60–62, 65–69, Phe143, and Arg146 contribute to the 4-CDP-2-C-methyl-D-erythritol 2-phosphate site; these read DIG and FPDTD.

Belongs to the IspF family. In terms of assembly, homotrimer. Requires a divalent metal cation as cofactor.

The enzyme catalyses 4-CDP-2-C-methyl-D-erythritol 2-phosphate = 2-C-methyl-D-erythritol 2,4-cyclic diphosphate + CMP. Its pathway is isoprenoid biosynthesis; isopentenyl diphosphate biosynthesis via DXP pathway; isopentenyl diphosphate from 1-deoxy-D-xylulose 5-phosphate: step 4/6. Its function is as follows. Involved in the biosynthesis of isopentenyl diphosphate (IPP) and dimethylallyl diphosphate (DMAPP), two major building blocks of isoprenoid compounds. Catalyzes the conversion of 4-diphosphocytidyl-2-C-methyl-D-erythritol 2-phosphate (CDP-ME2P) to 2-C-methyl-D-erythritol 2,4-cyclodiphosphate (ME-CPP) with a corresponding release of cytidine 5-monophosphate (CMP). This is 2-C-methyl-D-erythritol 2,4-cyclodiphosphate synthase from Azoarcus sp. (strain BH72).